The chain runs to 177 residues: Large ribosomal subunit protein uL6 (177 aa).

This sequence belongs to the universal ribosomal protein uL6 family. Part of the 50S ribosomal subunit.

Functionally, this protein binds to the 23S rRNA, and is important in its secondary structure. It is located near the subunit interface in the base of the L7/L12 stalk, and near the tRNA binding site of the peptidyltransferase center. This chain is Large ribosomal subunit protein uL6, found in Rickettsia conorii (strain ATCC VR-613 / Malish 7).